A 183-amino-acid polypeptide reads, in one-letter code: uncharacterized protein (183 aa).

Residues 153–175 traverse the membrane as a helical segment; that stretch reads LLYVFIRLFAGCLKVFRLCILWL.

The protein resides in the membrane. This is an uncharacterized protein from Saccharomyces cerevisiae (strain ATCC 204508 / S288c) (Baker's yeast).